Consider the following 44-residue polypeptide: Photosystem I reaction center subunit IX (44 aa).

The helical transmembrane segment at 7-27 (YLSTVPVLTTLWFGSLAGLLI) threads the bilayer.

Belongs to the PsaJ family.

It is found in the plastid. It localises to the chloroplast thylakoid membrane. Functionally, may help in the organization of the PsaE and PsaF subunits. The polypeptide is Photosystem I reaction center subunit IX (Dioscorea elephantipes (Elephant's foot yam)).